The sequence spans 321 residues: GDP-L-fucose synthase (321 aa).

Residue 14–20 (GGSGLVG) coordinates NADP(+). The active-site Proton donor/acceptor is tyrosine 143. NADP(+) contacts are provided by residues lysine 147, 170-173 (PTNV), and histidine 186. 4 residues coordinate substrate: lysine 194, tryptophan 208, arginine 215, and aspartate 277.

The protein belongs to the NAD(P)-dependent epimerase/dehydratase family. Fucose synthase subfamily. As to quaternary structure, homodimer.

The catalysed reaction is GDP-beta-L-fucose + NADP(+) = GDP-4-dehydro-alpha-D-rhamnose + NADPH + H(+). It participates in nucleotide-sugar biosynthesis; GDP-L-fucose biosynthesis via de novo pathway; GDP-L-fucose from GDP-alpha-D-mannose: step 2/2. Its function is as follows. Catalyzes the two-step NADP-dependent conversion of GDP-4-dehydro-6-deoxy-D-mannose to GDP-fucose, involving an epimerase and a reductase reaction. The sequence is that of GDP-L-fucose synthase (GFUS) from Cricetulus griseus (Chinese hamster).